We begin with the raw amino-acid sequence, 344 residues long: Phosphoribosylformylglycinamidine cyclo-ligase (344 aa).

Belongs to the AIR synthase family.

Its subcellular location is the cytoplasm. It catalyses the reaction 2-formamido-N(1)-(5-O-phospho-beta-D-ribosyl)acetamidine + ATP = 5-amino-1-(5-phospho-beta-D-ribosyl)imidazole + ADP + phosphate + H(+). The protein operates within purine metabolism; IMP biosynthesis via de novo pathway; 5-amino-1-(5-phospho-D-ribosyl)imidazole from N(2)-formyl-N(1)-(5-phospho-D-ribosyl)glycinamide: step 2/2. The sequence is that of Phosphoribosylformylglycinamidine cyclo-ligase from Laribacter hongkongensis (strain HLHK9).